A 154-amino-acid polypeptide reads, in one-letter code: Putative peroxiredoxin MT1643 (154 aa).

Residues 1 to 153 form the Thioredoxin domain; the sequence is MKTGDTVADF…ALATLRAIRS (153 aa). Catalysis depends on cysteine 44, which acts as the Cysteine sulfenic acid (-SOH) intermediate. Cysteine 44 and cysteine 49 are disulfide-bonded.

This sequence belongs to the peroxiredoxin family. BCP/PrxQ subfamily. Monomer.

The enzyme catalyses a hydroperoxide + [thioredoxin]-dithiol = an alcohol + [thioredoxin]-disulfide + H2O. Its function is as follows. Thiol-specific peroxidase that catalyzes the reduction of hydrogen peroxide and organic hydroperoxides to water and alcohols, respectively. Plays a role in cell protection against oxidative stress by detoxifying peroxides and as sensor of hydrogen peroxide-mediated signaling events. The sequence is that of Putative peroxiredoxin MT1643 (bcpB) from Mycobacterium tuberculosis (strain CDC 1551 / Oshkosh).